A 400-amino-acid chain; its full sequence is MSERVILAYSGGLDTSVAISWIGKETGSEVVAVAIDLGQGGEDMEVVRQRALDCGAVEAVVVDARDEFAEQYCLPAIKSNALYMDRYPLVSALSRPLIVKHLVDAAREHGGGVVAHGCTGKGNDQVRFEVGFASLAPDLKVLAPVRDYAWTREKAIAFAEENAIPINVTKRSPFSIDQNVWGRAVETGFLEHLWNAPTKDVYDYTEDPTLNWSSPDEVIIGFDKGVPVSIDGKPVTVLQAIEQLNARAGAQGVGRLDVVEDRLVGIKSREIYEAPGAMVLITAHTELEHVTLERELGRFKRTTDQKWGELVYDGLWFSPLKTALESFVANTQEHVTGEIRLVLHGGHIAVNGRRSQESLYDFNLATYDEGDTFDQSAAKGFVHVHGLSSSLSARRDLAGK.

8 to 16 (AYSGGLDTS) is an ATP binding site. Y87 contacts L-citrulline. G117 is a binding site for ATP. L-aspartate contacts are provided by T119, N123, and D124. L-citrulline is bound at residue N123. The L-citrulline site is built by R127, S175, E260, and Y272.

Belongs to the argininosuccinate synthase family. Type 1 subfamily. In terms of assembly, homotetramer.

Its subcellular location is the cytoplasm. The enzyme catalyses L-citrulline + L-aspartate + ATP = 2-(N(omega)-L-arginino)succinate + AMP + diphosphate + H(+). It participates in amino-acid biosynthesis; L-arginine biosynthesis; L-arginine from L-ornithine and carbamoyl phosphate: step 2/3. In Mycolicibacterium vanbaalenii (strain DSM 7251 / JCM 13017 / BCRC 16820 / KCTC 9966 / NRRL B-24157 / PYR-1) (Mycobacterium vanbaalenii), this protein is Argininosuccinate synthase.